A 421-amino-acid chain; its full sequence is Lipid II:glycine glycyltransferase (421 aa).

The protein belongs to the FemABX family. As to quaternary structure, monomer.

Its subcellular location is the cytoplasm. The enzyme catalyses beta-D-GlcNAc-(1-&gt;4)-Mur2Ac(oyl-L-Ala-D-isoglutaminyl-L-Lys-D-Ala-D-Ala)-di-trans,octa-cis-undecaprenyl diphosphate + glycyl-tRNA(Gly) = beta-D-GlcNAc-(1-&gt;4)-Mur2Ac(oyl-L-Ala-D-isoglutaminyl-L-Lys-(N(6)-Gly)-D-Ala-D-Ala)-di-trans,octa-cis-undecaprenyl diphosphate + tRNA(Gly) + H(+). In terms of biological role, catalyzes the incorporation of the first glycine of the pentaglycine interpeptide bridge, which is characteristic of the S.aureus peptidoglycan. This glycine is added to the epsilon-amino group of the L-lysine of the membrane-bound lipid II intermediate (GlcNAc-(beta-1,4)-N-acetylmuramic acid(-L-Ala-D-iGln-L-Lys-D-Ala-D-Ala)-pyrophosphoryl-undecaprenol), using glycyl-tRNA(Gly) as donor, in a ribosome-independent mechanism. Involved in methicillin resistance. This chain is Lipid II:glycine glycyltransferase (femX), found in Staphylococcus aureus (strain Mu50 / ATCC 700699).